Consider the following 482-residue polypeptide: tRNA-2-methylthio-N(6)-dimethylallyladenosine synthase (482 aa).

One can recognise an MTTase N-terminal domain in the interval 3–120 (KKLHIKTWGC…LPEMIKQVQG (118 aa)). [4Fe-4S] cluster contacts are provided by cysteine 12, cysteine 49, cysteine 83, cysteine 158, cysteine 162, and cysteine 165. The Radical SAM core domain maps to 144-376 (KADGPSAFVS…QNRITQMAQQ (233 aa)). A TRAM domain is found at 379–442 (RQMFDTEQRI…PNSLRGDLIR (64 aa)).

This sequence belongs to the methylthiotransferase family. MiaB subfamily. As to quaternary structure, monomer. The cofactor is [4Fe-4S] cluster.

It localises to the cytoplasm. The catalysed reaction is N(6)-dimethylallyladenosine(37) in tRNA + (sulfur carrier)-SH + AH2 + 2 S-adenosyl-L-methionine = 2-methylsulfanyl-N(6)-dimethylallyladenosine(37) in tRNA + (sulfur carrier)-H + 5'-deoxyadenosine + L-methionine + A + S-adenosyl-L-homocysteine + 2 H(+). Its function is as follows. Catalyzes the methylthiolation of N6-(dimethylallyl)adenosine (i(6)A), leading to the formation of 2-methylthio-N6-(dimethylallyl)adenosine (ms(2)i(6)A) at position 37 in tRNAs that read codons beginning with uridine. In Pseudoalteromonas translucida (strain TAC 125), this protein is tRNA-2-methylthio-N(6)-dimethylallyladenosine synthase.